We begin with the raw amino-acid sequence, 137 residues long: Large-conductance mechanosensitive channel (137 aa).

2 consecutive transmembrane segments (helical) span residues 10–30 and 76–96; these read FAMR…AAFG and GTFI…FSAV.

This sequence belongs to the MscL family. In terms of assembly, homopentamer.

The protein localises to the cell inner membrane. In terms of biological role, channel that opens in response to stretch forces in the membrane lipid bilayer. May participate in the regulation of osmotic pressure changes within the cell. The chain is Large-conductance mechanosensitive channel from Yersinia pseudotuberculosis serotype O:1b (strain IP 31758).